Here is a 303-residue protein sequence, read N- to C-terminus: Pyridoxal 5'-phosphate synthase subunit PdxS (303 aa).

D33 lines the D-ribose 5-phosphate pocket. K90 acts as the Schiff-base intermediate with D-ribose 5-phosphate in catalysis. G162 provides a ligand contact to D-ribose 5-phosphate. Residue R174 participates in D-glyceraldehyde 3-phosphate binding. D-ribose 5-phosphate contacts are provided by residues G223 and 244 to 245 (GS).

The protein belongs to the PdxS/SNZ family. As to quaternary structure, in the presence of PdxT, forms a dodecamer of heterodimers.

It catalyses the reaction aldehydo-D-ribose 5-phosphate + D-glyceraldehyde 3-phosphate + L-glutamine = pyridoxal 5'-phosphate + L-glutamate + phosphate + 3 H2O + H(+). Its pathway is cofactor biosynthesis; pyridoxal 5'-phosphate biosynthesis. Its function is as follows. Catalyzes the formation of pyridoxal 5'-phosphate from ribose 5-phosphate (RBP), glyceraldehyde 3-phosphate (G3P) and ammonia. The ammonia is provided by the PdxT subunit. Can also use ribulose 5-phosphate and dihydroxyacetone phosphate as substrates, resulting from enzyme-catalyzed isomerization of RBP and G3P, respectively. This Mycolicibacterium smegmatis (strain ATCC 700084 / mc(2)155) (Mycobacterium smegmatis) protein is Pyridoxal 5'-phosphate synthase subunit PdxS.